Consider the following 413-residue polypeptide: Putative competence-damage inducible protein (413 aa).

This sequence belongs to the CinA family.

This is Putative competence-damage inducible protein from Alkaliphilus oremlandii (strain OhILAs) (Clostridium oremlandii (strain OhILAs)).